A 60-amino-acid polypeptide reads, in one-letter code: Large ribosomal subunit protein uL30 (60 aa).

This sequence belongs to the universal ribosomal protein uL30 family. As to quaternary structure, part of the 50S ribosomal subunit.

The sequence is that of Large ribosomal subunit protein uL30 from Acidovorax ebreus (strain TPSY) (Diaphorobacter sp. (strain TPSY)).